A 198-amino-acid polypeptide reads, in one-letter code: Phosphoheptose isomerase (198 aa).

The 163-residue stretch at 36–198 folds into the SIS domain; it reads MIGSLLNNGK…DCLLLGVEDQ (163 aa). 51-53 is a substrate binding site; it reads NGG. Residues histidine 60 and glutamate 64 each coordinate Zn(2+). Substrate contacts are provided by residues glutamate 64, 93-94, 119-121, serine 124, and glutamine 174; these read ND and STS. Glutamine 174 and histidine 182 together coordinate Zn(2+).

The protein belongs to the SIS family. GmhA subfamily. In terms of assembly, homotetramer. Requires Zn(2+) as cofactor.

It is found in the cytoplasm. It carries out the reaction 2 D-sedoheptulose 7-phosphate = D-glycero-alpha-D-manno-heptose 7-phosphate + D-glycero-beta-D-manno-heptose 7-phosphate. It participates in carbohydrate biosynthesis; D-glycero-D-manno-heptose 7-phosphate biosynthesis; D-glycero-alpha-D-manno-heptose 7-phosphate and D-glycero-beta-D-manno-heptose 7-phosphate from sedoheptulose 7-phosphate: step 1/1. Its function is as follows. Catalyzes the isomerization of sedoheptulose 7-phosphate in D-glycero-D-manno-heptose 7-phosphate. This Aromatoleum aromaticum (strain DSM 19018 / LMG 30748 / EbN1) (Azoarcus sp. (strain EbN1)) protein is Phosphoheptose isomerase.